Here is a 404-residue protein sequence, read N- to C-terminus: S-adenosylmethionine synthase (404 aa).

Polar residues predominate over residues 1–13 (MSQSRYFFTSESV). The tract at residues 1-21 (MSQSRYFFTSESVSEGHPDKV) is disordered. Position 17 (His-17) interacts with ATP. Asp-19 provides a ligand contact to Mg(2+). Glu-45 is a binding site for K(+). Residues Glu-58 and Gln-101 each coordinate L-methionine. The segment at 101–111 (QSPDINRGVDR) is flexible loop. Residues 172–174 (DAK), 245–246 (RF), Asp-254, 260–261 (RK), Ala-277, and Lys-281 contribute to the ATP site. Asp-254 serves as a coordination point for L-methionine. Residue Lys-285 coordinates L-methionine.

Belongs to the AdoMet synthase family. As to quaternary structure, homotetramer; dimer of dimers. Requires Mg(2+) as cofactor. K(+) is required as a cofactor.

The protein localises to the cytoplasm. It carries out the reaction L-methionine + ATP + H2O = S-adenosyl-L-methionine + phosphate + diphosphate. The protein operates within amino-acid biosynthesis; S-adenosyl-L-methionine biosynthesis; S-adenosyl-L-methionine from L-methionine: step 1/1. Catalyzes the formation of S-adenosylmethionine (AdoMet) from methionine and ATP. The overall synthetic reaction is composed of two sequential steps, AdoMet formation and the subsequent tripolyphosphate hydrolysis which occurs prior to release of AdoMet from the enzyme. The polypeptide is S-adenosylmethionine synthase (Chlorobium phaeobacteroides (strain DSM 266 / SMG 266 / 2430)).